The primary structure comprises 81 residues: Putative membrane protein insertion efficiency factor (81 aa).

This sequence belongs to the UPF0161 family.

Its subcellular location is the cell inner membrane. Could be involved in insertion of integral membrane proteins into the membrane. The protein is Putative membrane protein insertion efficiency factor of Thermotoga maritima (strain ATCC 43589 / DSM 3109 / JCM 10099 / NBRC 100826 / MSB8).